Here is a 644-residue protein sequence, read N- to C-terminus: 1-deoxy-D-xylulose-5-phosphate synthase (644 aa).

Thiamine diphosphate is bound by residues histidine 78 and 120-122 (GHA). Residue aspartate 150 coordinates Mg(2+). Thiamine diphosphate contacts are provided by residues 151–152 (AA), asparagine 179, and glutamate 374. Asparagine 179 contributes to the Mg(2+) binding site.

This sequence belongs to the transketolase family. DXPS subfamily. In terms of assembly, homodimer. Mg(2+) serves as cofactor. Thiamine diphosphate is required as a cofactor.

The catalysed reaction is D-glyceraldehyde 3-phosphate + pyruvate + H(+) = 1-deoxy-D-xylulose 5-phosphate + CO2. Its pathway is metabolic intermediate biosynthesis; 1-deoxy-D-xylulose 5-phosphate biosynthesis; 1-deoxy-D-xylulose 5-phosphate from D-glyceraldehyde 3-phosphate and pyruvate: step 1/1. In terms of biological role, catalyzes the acyloin condensation reaction between C atoms 2 and 3 of pyruvate and glyceraldehyde 3-phosphate to yield 1-deoxy-D-xylulose-5-phosphate (DXP). This chain is 1-deoxy-D-xylulose-5-phosphate synthase, found in Chlamydia pneumoniae (Chlamydophila pneumoniae).